Reading from the N-terminus, the 345-residue chain is Fibronectin type 3 and ankyrin repeat domains protein 1 (345 aa).

In terms of domain architecture, Fibronectin type-III spans 8–108 (PPSKPHPPVV…LVSVSTTREP (101 aa)). ANK repeat units lie at residues 109 to 139 (ISSE…KVDV), 143 to 172 (FGFT…DVNL), 176 to 205 (SGKD…SWQA), 209 to 238 (GGCT…EVDV), 243 to 273 (SGWT…NVNV), and 277 to 306 (NGKT…DASV).

As to quaternary structure, interacts with COPS5; regulates the phosphorylation of JUN and the transcriptional activity of AP-1. Interacts with RYBP; may prevent the ubiquitin-mediated proteasomal degradation of FANK1. Post-translationally, polyubiquitinated. Polyubiquitination leads to proteasomal degradation. As to expression, mostly restricted to testis.

It is found in the nucleus. The protein resides in the cytoplasm. Its subcellular location is the cytosol. It localises to the cytoskeleton. The protein localises to the cilium basal body. It is found in the cell projection. The protein resides in the cilium. Functionally, through the activation of JUN and AP-1-mediated transcription, may regulate apoptosis. In Homo sapiens (Human), this protein is Fibronectin type 3 and ankyrin repeat domains protein 1.